The sequence spans 263 residues: Inactive adenylate kinase (263 aa).

It belongs to the adenylate kinase family.

It is found in the cytoplasm. Lacks adenylate kinase activity. This is Inactive adenylate kinase from Plasmodium falciparum (isolate 3D7).